The chain runs to 867 residues: FO synthase (867 aa).

The segment at 1 to 22 (MTTSATSGTGPADPAGPTENSM) is disordered. 2 Radical SAM core domains span residues 75-325 (ITYS…LQAP) and 534-769 (VTYI…LLHP). The interval 76-407 (TYSKSVFVPL…PRLRPHVAAL (332 aa)) is cofG-like. [4Fe-4S] cluster is bound by residues C89, C93, C96, C548, C552, and C555. A cofH-like region spans residues 511 to 844 (EGPALDALCG…KPRTTLYGPV (334 aa)). Positions 835-867 (KPRTTLYGPVPEERQRAARDSDGHLPELLPVLD) are disordered. The segment covering 845–859 (PEERQRAARDSDGHL) has biased composition (basic and acidic residues).

This sequence in the N-terminal section; belongs to the radical SAM superfamily. CofG family. It in the C-terminal section; belongs to the radical SAM superfamily. CofH family. Requires [4Fe-4S] cluster as cofactor.

The enzyme catalyses 5-amino-6-(D-ribitylamino)uracil + L-tyrosine + S-adenosyl-L-methionine = 5-amino-5-(4-hydroxybenzyl)-6-(D-ribitylimino)-5,6-dihydrouracil + 2-iminoacetate + 5'-deoxyadenosine + L-methionine + H(+). It catalyses the reaction 5-amino-5-(4-hydroxybenzyl)-6-(D-ribitylimino)-5,6-dihydrouracil + S-adenosyl-L-methionine = 7,8-didemethyl-8-hydroxy-5-deazariboflavin + 5'-deoxyadenosine + L-methionine + NH4(+) + H(+). The protein operates within cofactor biosynthesis; coenzyme F0 biosynthesis. In terms of biological role, catalyzes the radical-mediated synthesis of 7,8-didemethyl-8-hydroxy-5-deazariboflavin (FO) from 5-amino-6-(D-ribitylamino)uracil and L-tyrosine. In Streptomyces coelicolor (strain ATCC BAA-471 / A3(2) / M145), this protein is FO synthase (fbiC).